The sequence spans 60 residues: Conotoxin Pu5.6 (60 aa).

Residues 1–19 (MRCVPVFVILLLLIASAAS) form the signal peptide. Positions 20 to 47 (IDAQQKTKDDAPLTSLNDNALQQHWNKR) are excised as a propeptide.

This sequence belongs to the conotoxin T superfamily. Post-translationally, contains 2 disulfide bonds that can be either 'C1-C3, C2-C4' or 'C1-C4, C2-C3', since these disulfide connectivities have been observed for conotoxins with cysteine framework V (for examples, see AC P0DQQ7 and AC P81755). Expressed by the venom duct.

It localises to the secreted. The polypeptide is Conotoxin Pu5.6 (Conus pulicarius (Flea-bitten cone)).